A 144-amino-acid chain; its full sequence is Granulocyte-macrophage colony-stimulating factor (144 aa).

Positions 1-17 (MWLQNLLFLGTVVCSIS) are cleaved as a signal peptide. Ser-22 carries an O-linked (GalNAc...) serine glycan. Thr-27 carries an O-linked (GalNAc...) threonine glycan. A glycan (N-linked (GlcNAc...) asparagine) is linked at Asn-44. Disulfide bonds link Cys-71/Cys-113 and Cys-105/Cys-138.

It belongs to the GM-CSF family. In terms of assembly, monomer. The signaling GM-CSF receptor complex is a dodecamer of two head-to-head hexamers of two alpha, two beta, and two ligand subunits.

It is found in the secreted. In terms of biological role, cytokine that stimulates the growth and differentiation of hematopoietic precursor cells from various lineages, including granulocytes, macrophages, eosinophils and erythrocytes. This Canis lupus familiaris (Dog) protein is Granulocyte-macrophage colony-stimulating factor (CSF2).